Here is a 103-residue protein sequence, read N- to C-terminus: Small ribosomal subunit protein uS10 (103 aa).

It belongs to the universal ribosomal protein uS10 family. Part of the 30S ribosomal subunit.

Functionally, involved in the binding of tRNA to the ribosomes. The chain is Small ribosomal subunit protein uS10 from Campylobacter hominis (strain ATCC BAA-381 / DSM 21671 / CCUG 45161 / LMG 19568 / NCTC 13146 / CH001A).